The primary structure comprises 479 residues: MSGKTLYDKIWDAHVVSEAGGEAILYIDLHLIHEVTTPQAFAGLRAAGRKVRRPDRTLAVADHNIPTEGQALGVDAVADEEARLQLKTLARNVADNGIEFFPMGDIRNGIVHVVGPEQGRTQPGMTIVCGDSHTSTHGAFGALAHGIGTSEVEHVLATQTLRQKKAKNMLVRVDGQLPPGVTGKDVALAVIGEIGTAGGTGYVIEFAGEAIAGLSMEGRMTLCNLTIEGGAKAGLVAPDDKTFAYIQGKPAAPKGAAWDMALSHWKTFFTDEDAVFDRTVVIDGSALVPMVTWGTSPEDVIPVTGNVPDPESFATPDKRAAAHRALDYMGLKAGQPISEARIDRVFIGSCTNSRIEDMRAAAAVVQEAFLHGRLVAPHVKAMVVPGSGLVKEQAEEEGLDAIFKAAGFDWREPGCSMCLAMNPDKLAPQERCASTSNRNFEGRQGRAGRTHLVSPAMAAAAAIAGHLVDVRTLFSETAQ.

[4Fe-4S] cluster contacts are provided by cysteine 350, cysteine 415, and cysteine 418.

The protein belongs to the aconitase/IPM isomerase family. LeuC type 1 subfamily. Heterodimer of LeuC and LeuD. [4Fe-4S] cluster serves as cofactor.

It carries out the reaction (2R,3S)-3-isopropylmalate = (2S)-2-isopropylmalate. It participates in amino-acid biosynthesis; L-leucine biosynthesis; L-leucine from 3-methyl-2-oxobutanoate: step 2/4. Functionally, catalyzes the isomerization between 2-isopropylmalate and 3-isopropylmalate, via the formation of 2-isopropylmaleate. The chain is 3-isopropylmalate dehydratase large subunit from Caulobacter vibrioides (strain ATCC 19089 / CIP 103742 / CB 15) (Caulobacter crescentus).